We begin with the raw amino-acid sequence, 191 residues long: MTMLRPAILLFILLTLVTGGLYPLLTTALGQWWFTDQANGSLIIQNGENRGSRLIGQNFTDARYFQGRPSATAGSPYNPMASGGSNLAGSNPELDNAIGERVAALRAANPQASRDVPVELVTASASGLDYSLTSESVAWQIPRVAAARQLTTEQVRKVVEEHTQKPLVNFIGMPVANIVELNLALDAQRKN.

A helical transmembrane segment spans residues 6 to 26; the sequence is PAILLFILLTLVTGGLYPLLT.

This sequence belongs to the KdpC family. As to quaternary structure, the system is composed of three essential subunits: KdpA, KdpB and KdpC.

The protein resides in the cell inner membrane. In terms of biological role, part of the high-affinity ATP-driven potassium transport (or Kdp) system, which catalyzes the hydrolysis of ATP coupled with the electrogenic transport of potassium into the cytoplasm. This subunit acts as a catalytic chaperone that increases the ATP-binding affinity of the ATP-hydrolyzing subunit KdpB by the formation of a transient KdpB/KdpC/ATP ternary complex. The sequence is that of Potassium-transporting ATPase KdpC subunit from Enterobacter sp. (strain 638).